Consider the following 167-residue polypeptide: E1B protein, small T-antigen (167 aa).

The disordered stretch occupies residues 143 to 167; the sequence is GLDPVQEEEEEEENLRAGLDPSTEL.

Belongs to the adenoviridae E1B 19 kDa protein family.

It is found in the host cell membrane. It localises to the host nucleus envelope. The protein resides in the host nucleus lamina. Functionally, putative adenovirus Bcl-2 homolog that inhibits apoptosis induced by TNF or FAS pathways, as well as p53-mediated apoptosis. Without E1B 19K function, virus production is compromised because of premature death of host cell. Interacts with Bax protein in cell lysates. The sequence is that of E1B protein, small T-antigen from Human adenovirus F serotype 40 (HAdV-40).